We begin with the raw amino-acid sequence, 193 residues long: Oligoribonuclease (193 aa).

An Exonuclease domain is found at Leu-8–Leu-171. Tyr-129 is a catalytic residue.

This sequence belongs to the oligoribonuclease family.

It is found in the cytoplasm. 3'-to-5' exoribonuclease specific for small oligoribonucleotides. This Alkalilimnicola ehrlichii (strain ATCC BAA-1101 / DSM 17681 / MLHE-1) protein is Oligoribonuclease.